A 254-amino-acid polypeptide reads, in one-letter code: Probable pectate lyase E (254 aa).

Positions 1-17 (MLQSLLLLPLFLTSAFA) are cleaved as a signal peptide. N-linked (GlcNAc...) asparagine glycosylation occurs at Asn175. Positions 228–254 (NNNGKEPKKKSSGPSKACEYNQPLKKC) are disordered.

Belongs to the polysaccharide lyase 3 family. Ca(2+) is required as a cofactor.

It localises to the secreted. The enzyme catalyses Eliminative cleavage of (1-&gt;4)-alpha-D-galacturonan to give oligosaccharides with 4-deoxy-alpha-D-galact-4-enuronosyl groups at their non-reducing ends.. In terms of biological role, pectinolytic enzyme consist of four classes of enzymes: pectin lyase, polygalacturonase, pectin methylesterase and rhamnogalacturonase. Among pectinolytic enzymes, pectin lyase is the most important in depolymerization of pectin, since it cleaves internal glycosidic bonds of highly methylated pectins. Favors pectate, the anion, over pectin, the methyl ester. This is Probable pectate lyase E (plyE) from Aspergillus clavatus (strain ATCC 1007 / CBS 513.65 / DSM 816 / NCTC 3887 / NRRL 1 / QM 1276 / 107).